A 615-amino-acid polypeptide reads, in one-letter code: DNA mismatch repair protein MutL (615 aa).

The segment covering 378 to 391 has biased composition (low complexity); sequence PAPASGSRPAAPWP. A disordered region spans residues 378–397; it reads PAPASGSRPAAPWPNAQPGY.

This sequence belongs to the DNA mismatch repair MutL/HexB family.

In terms of biological role, this protein is involved in the repair of mismatches in DNA. It is required for dam-dependent methyl-directed DNA mismatch repair. May act as a 'molecular matchmaker', a protein that promotes the formation of a stable complex between two or more DNA-binding proteins in an ATP-dependent manner without itself being part of a final effector complex. This chain is DNA mismatch repair protein MutL, found in Escherichia coli O127:H6 (strain E2348/69 / EPEC).